The sequence spans 420 residues: Tyrosine--tRNA ligase (420 aa).

Y39 lines the L-tyrosine pocket. The short motif at 44–53 (CTAPSLHIGS) is the 'HIGH' region element. Residues Y176 and Q180 each contribute to the L-tyrosine site. The short motif at 236-240 (KMGKT) is the 'KMSKS' region element. K239 provides a ligand contact to ATP. An S4 RNA-binding domain is found at 349–414 (IPLIDLLYDT…AGKKRHIKIL (66 aa)).

This sequence belongs to the class-I aminoacyl-tRNA synthetase family. TyrS type 1 subfamily. In terms of assembly, homodimer.

The protein resides in the cytoplasm. The enzyme catalyses tRNA(Tyr) + L-tyrosine + ATP = L-tyrosyl-tRNA(Tyr) + AMP + diphosphate + H(+). Functionally, catalyzes the attachment of tyrosine to tRNA(Tyr) in a two-step reaction: tyrosine is first activated by ATP to form Tyr-AMP and then transferred to the acceptor end of tRNA(Tyr). The polypeptide is Tyrosine--tRNA ligase (Wolbachia pipientis subsp. Culex pipiens (strain wPip)).